The primary structure comprises 823 residues: Dimethyl sulfoxide/trimethylamine N-oxide reductase (823 aa).

Residues M1–A42 constitute a signal peptide (tat-type signal). Mo-bis(molybdopterin guanine dinucleotide)-binding positions include Y156–S160, W158, S189, K232–T233, I262–D263, Q283–D285, W364–S365, R368, N476, H480, H500–D501, R523, D553, H685–P686, H691–Q693, N779, and G796–Q797.

Homodimer. Requires Mo-bis(molybdopterin guanine dinucleotide) as cofactor. In terms of processing, predicted to be exported by the Tat system. The position of the signal peptide cleavage has been experimentally proven.

The protein resides in the periplasm. It carries out the reaction dimethyl sulfide + a menaquinone + H2O = dimethyl sulfoxide + a menaquinol. The catalysed reaction is trimethylamine + 2 Fe(III)-[cytochrome c] + H2O = trimethylamine N-oxide + 2 Fe(II)-[cytochrome c] + 3 H(+). Its function is as follows. Catalyzes the reduction of dimethyl sulfoxide (DMSO) and trimethylamine N-oxide (TMAO) to dimethyl sulfide (DMS) and trimethylamine, respectively. The terminal DMSO reductase can also use various sulfoxides and N-oxide compounds as terminal electron acceptor in addition to DMSO and TMAO. This is Dimethyl sulfoxide/trimethylamine N-oxide reductase (dorA) from Rhodobacter capsulatus (Rhodopseudomonas capsulata).